Consider the following 197-residue polypeptide: Ribonuclease HII (197 aa).

The RNase H type-2 domain occupies 9 to 197 (ELIAGVDEVG…APVKKALEQF (189 aa)). Aspartate 15, glutamate 16, and aspartate 107 together coordinate a divalent metal cation.

This sequence belongs to the RNase HII family. Mn(2+) serves as cofactor. The cofactor is Mg(2+).

It is found in the cytoplasm. It carries out the reaction Endonucleolytic cleavage to 5'-phosphomonoester.. In terms of biological role, endonuclease that specifically degrades the RNA of RNA-DNA hybrids. The sequence is that of Ribonuclease HII from Haemophilus influenzae (strain 86-028NP).